A 379-amino-acid polypeptide reads, in one-letter code: Cytoplasmic tRNA 2-thiolation protein 1 (379 aa).

Belongs to the TtcA family. CTU1/NCS6/ATPBD3 subfamily.

The protein localises to the cytoplasm. The protein operates within tRNA modification; 5-methoxycarbonylmethyl-2-thiouridine-tRNA biosynthesis. Its function is as follows. Plays a central role in 2-thiolation of mcm(5)S(2)U at tRNA wobble positions of tRNA(Lys), tRNA(Glu) and tRNA(Gln). Directly binds tRNAs and probably acts by catalyzing adenylation of tRNAs, an intermediate required for 2-thiolation. It is unclear whether it acts as a sulfurtransferase that transfers sulfur from thiocarboxylated URM1 onto the uridine of tRNAs at wobble position. Prior mcm(5) tRNA modification by the elongator complex is required for 2-thiolation. May also be involved in protein urmylation. The protein is Cytoplasmic tRNA 2-thiolation protein 1 of Lodderomyces elongisporus (strain ATCC 11503 / CBS 2605 / JCM 1781 / NBRC 1676 / NRRL YB-4239) (Yeast).